The chain runs to 274 residues: Formamidopyrimidine-DNA glycosylase (274 aa).

Catalysis depends on Pro2, which acts as the Schiff-base intermediate with DNA. Glu3 acts as the Proton donor in catalysis. The active-site Proton donor; for beta-elimination activity is the Lys59. DNA-binding residues include His93, Arg112, and Lys153. The FPG-type zinc-finger motif lies at Gln238–Gln272. Arg262 functions as the Proton donor; for delta-elimination activity in the catalytic mechanism.

The protein belongs to the FPG family. Monomer. It depends on Zn(2+) as a cofactor.

The enzyme catalyses Hydrolysis of DNA containing ring-opened 7-methylguanine residues, releasing 2,6-diamino-4-hydroxy-5-(N-methyl)formamidopyrimidine.. The catalysed reaction is 2'-deoxyribonucleotide-(2'-deoxyribose 5'-phosphate)-2'-deoxyribonucleotide-DNA = a 3'-end 2'-deoxyribonucleotide-(2,3-dehydro-2,3-deoxyribose 5'-phosphate)-DNA + a 5'-end 5'-phospho-2'-deoxyribonucleoside-DNA + H(+). Its function is as follows. Involved in base excision repair of DNA damaged by oxidation or by mutagenic agents. Acts as a DNA glycosylase that recognizes and removes damaged bases. Has a preference for oxidized purines, such as 7,8-dihydro-8-oxoguanine (8-oxoG). Has AP (apurinic/apyrimidinic) lyase activity and introduces nicks in the DNA strand. Cleaves the DNA backbone by beta-delta elimination to generate a single-strand break at the site of the removed base with both 3'- and 5'-phosphates. This is Formamidopyrimidine-DNA glycosylase from Mycoplasma mobile (strain ATCC 43663 / 163K / NCTC 11711) (Mesomycoplasma mobile).